A 342-amino-acid polypeptide reads, in one-letter code: L-threonine 3-dehydrogenase (342 aa).

Cys-39 is a binding site for Zn(2+). Residues Thr-41 and His-44 each act as charge relay system in the active site. Zn(2+)-binding residues include His-64, Glu-65, Cys-94, Cys-97, Cys-100, and Cys-108. NAD(+)-binding positions include Ile-176, Asp-196, Arg-201, 263-265 (LGI), and 287-288 (IY).

The protein belongs to the zinc-containing alcohol dehydrogenase family. As to quaternary structure, homotetramer. The cofactor is Zn(2+).

Its subcellular location is the cytoplasm. The enzyme catalyses L-threonine + NAD(+) = (2S)-2-amino-3-oxobutanoate + NADH + H(+). The protein operates within amino-acid degradation; L-threonine degradation via oxydo-reductase pathway; glycine from L-threonine: step 1/2. Its function is as follows. Catalyzes the NAD(+)-dependent oxidation of L-threonine to 2-amino-3-ketobutyrate. The polypeptide is L-threonine 3-dehydrogenase (Protochlamydia amoebophila (strain UWE25)).